A 209-amino-acid chain; its full sequence is Uracil phosphoribosyltransferase (209 aa).

Residues R79, R104, and 131–139 (DPMLATGAS) contribute to the 5-phospho-alpha-D-ribose 1-diphosphate site. Uracil-binding positions include I194 and 199-201 (GDA). Residue D200 participates in 5-phospho-alpha-D-ribose 1-diphosphate binding.

This sequence belongs to the UPRTase family. Mg(2+) serves as cofactor.

The enzyme catalyses UMP + diphosphate = 5-phospho-alpha-D-ribose 1-diphosphate + uracil. Its pathway is pyrimidine metabolism; UMP biosynthesis via salvage pathway; UMP from uracil: step 1/1. Its activity is regulated as follows. Allosterically activated by GTP. Its function is as follows. Catalyzes the conversion of uracil and 5-phospho-alpha-D-ribose 1-diphosphate (PRPP) to UMP and diphosphate. This Staphylococcus carnosus (strain TM300) protein is Uracil phosphoribosyltransferase.